The sequence spans 228 residues: Protein slowmo homolog (228 aa).

Positions 1–172 constitute a PRELI/MSF1 domain; the sequence is MPLFETIKHT…TIIKVQKEAE (172 aa).

The protein belongs to the slowmo family.

The protein is Protein slowmo homolog (slmo) of Dictyostelium discoideum (Social amoeba).